A 313-amino-acid polypeptide reads, in one-letter code: Methionyl-tRNA formyltransferase (313 aa).

109–112 (SLLP) contacts (6S)-5,6,7,8-tetrahydrofolate.

It belongs to the Fmt family.

It catalyses the reaction L-methionyl-tRNA(fMet) + (6R)-10-formyltetrahydrofolate = N-formyl-L-methionyl-tRNA(fMet) + (6S)-5,6,7,8-tetrahydrofolate + H(+). Functionally, attaches a formyl group to the free amino group of methionyl-tRNA(fMet). The formyl group appears to play a dual role in the initiator identity of N-formylmethionyl-tRNA by promoting its recognition by IF2 and preventing the misappropriation of this tRNA by the elongation apparatus. This is Methionyl-tRNA formyltransferase from Thermotoga sp. (strain RQ2).